We begin with the raw amino-acid sequence, 269 residues long: 3-methyl-2-oxobutanoate hydroxymethyltransferase (269 aa).

The Mg(2+) site is built by Asp43 and Asp82. Residues 43–44, Asp82, and Lys110 contribute to the 3-methyl-2-oxobutanoate site; that span reads DS. Residue Glu112 participates in Mg(2+) binding. Glu179 (proton acceptor) is an active-site residue.

Belongs to the PanB family. As to quaternary structure, homodecamer; pentamer of dimers. The cofactor is Mg(2+).

It is found in the cytoplasm. It catalyses the reaction 3-methyl-2-oxobutanoate + (6R)-5,10-methylene-5,6,7,8-tetrahydrofolate + H2O = 2-dehydropantoate + (6S)-5,6,7,8-tetrahydrofolate. Its pathway is cofactor biosynthesis; (R)-pantothenate biosynthesis; (R)-pantoate from 3-methyl-2-oxobutanoate: step 1/2. Catalyzes the reversible reaction in which hydroxymethyl group from 5,10-methylenetetrahydrofolate is transferred onto alpha-ketoisovalerate to form ketopantoate. This is 3-methyl-2-oxobutanoate hydroxymethyltransferase from Acinetobacter baumannii (strain AB307-0294).